We begin with the raw amino-acid sequence, 345 residues long: Phosphoribosylformylglycinamidine cyclo-ligase (345 aa).

It belongs to the AIR synthase family.

The protein localises to the cytoplasm. The enzyme catalyses 2-formamido-N(1)-(5-O-phospho-beta-D-ribosyl)acetamidine + ATP = 5-amino-1-(5-phospho-beta-D-ribosyl)imidazole + ADP + phosphate + H(+). It participates in purine metabolism; IMP biosynthesis via de novo pathway; 5-amino-1-(5-phospho-D-ribosyl)imidazole from N(2)-formyl-N(1)-(5-phospho-D-ribosyl)glycinamide: step 2/2. In Shewanella sp. (strain MR-7), this protein is Phosphoribosylformylglycinamidine cyclo-ligase.